Here is a 138-residue protein sequence, read N- to C-terminus: Large ribosomal subunit protein uL16 (138 aa).

Positions 1–16 are enriched in basic residues; sequence MLIPRKVAHRKQHHPG. Residues 1–24 are disordered; that stretch reads MLIPRKVAHRKQHHPGRTGAAKGG.

The protein belongs to the universal ribosomal protein uL16 family. In terms of assembly, part of the 50S ribosomal subunit.

Functionally, binds 23S rRNA and is also seen to make contacts with the A and possibly P site tRNAs. This is Large ribosomal subunit protein uL16 from Frankia alni (strain DSM 45986 / CECT 9034 / ACN14a).